We begin with the raw amino-acid sequence, 362 residues long: Cobalt-precorrin-5B C(1)-methyltransferase (362 aa).

Belongs to the CbiD family.

It carries out the reaction Co-precorrin-5B + S-adenosyl-L-methionine = Co-precorrin-6A + S-adenosyl-L-homocysteine. It participates in cofactor biosynthesis; adenosylcobalamin biosynthesis; cob(II)yrinate a,c-diamide from sirohydrochlorin (anaerobic route): step 6/10. Catalyzes the methylation of C-1 in cobalt-precorrin-5B to form cobalt-precorrin-6A. The sequence is that of Cobalt-precorrin-5B C(1)-methyltransferase from Burkholderia cenocepacia (strain ATCC BAA-245 / DSM 16553 / LMG 16656 / NCTC 13227 / J2315 / CF5610) (Burkholderia cepacia (strain J2315)).